Consider the following 666-residue polypeptide: Probable potassium transport system protein Kup (666 aa).

The next 12 membrane-spanning stretches (helical) occupy residues 16–36 (GFIIALGIVYGDIGTSPLYTM), 58–78 (ISLIIWTLTLITTIKYVLIAL), 100–120 (PWLIVPAMIGGATLLSDGALT), 149–169 (IITTLVILIVLFGIQRFGTGF), 173–193 (IFGPVMFIWFSFLGVSGFFNM), 221–241 (IFILGSIFLATTGAEALYSDL), 253–273 (WPFVKMCIVLSYCGQAAWILA), 294–314 (VYLVSLATLAAIIASQALISG), 343–363 (LYIPVINWILFAVTSCTVLAF), 373–393 (YGLAITITMLMTTILLKYYLI), 399–419 (PILAHLVMAFFALVEFIFFLA), and 424–444 (FMHGGYAVVILALAIVFVMFI).

The protein belongs to the HAK/KUP transporter (TC 2.A.72) family.

Its subcellular location is the cell membrane. It catalyses the reaction K(+)(in) + H(+)(in) = K(+)(out) + H(+)(out). Functionally, transport of potassium into the cell. Likely operates as a K(+):H(+) symporter. The sequence is that of Probable potassium transport system protein Kup from Streptococcus pyogenes serotype M3 (strain ATCC BAA-595 / MGAS315).